The primary structure comprises 336 residues: Aspartate--ammonia ligase (336 aa).

The protein belongs to the class-II aminoacyl-tRNA synthetase family. AsnA subfamily.

It localises to the cytoplasm. It carries out the reaction L-aspartate + NH4(+) + ATP = L-asparagine + AMP + diphosphate + H(+). It participates in amino-acid biosynthesis; L-asparagine biosynthesis; L-asparagine from L-aspartate (ammonia route): step 1/1. This is Aspartate--ammonia ligase from Ligilactobacillus salivarius (strain UCC118) (Lactobacillus salivarius).